The chain runs to 217 residues: Probable transaldolase (217 aa).

Residue Lys83 is the Schiff-base intermediate with substrate of the active site.

This sequence belongs to the transaldolase family. Type 3B subfamily.

The protein localises to the cytoplasm. It carries out the reaction D-sedoheptulose 7-phosphate + D-glyceraldehyde 3-phosphate = D-erythrose 4-phosphate + beta-D-fructose 6-phosphate. It functions in the pathway carbohydrate degradation; pentose phosphate pathway; D-glyceraldehyde 3-phosphate and beta-D-fructose 6-phosphate from D-ribose 5-phosphate and D-xylulose 5-phosphate (non-oxidative stage): step 2/3. In terms of biological role, transaldolase is important for the balance of metabolites in the pentose-phosphate pathway. The protein is Probable transaldolase of Bartonella quintana (strain Toulouse) (Rochalimaea quintana).